The primary structure comprises 157 residues: SsrA-binding protein (157 aa).

Residues 135-157 (KRDTIKDREGKREVERAMKTNHR) form a disordered region.

Belongs to the SmpB family.

It is found in the cytoplasm. Functionally, required for rescue of stalled ribosomes mediated by trans-translation. Binds to transfer-messenger RNA (tmRNA), required for stable association of tmRNA with ribosomes. tmRNA and SmpB together mimic tRNA shape, replacing the anticodon stem-loop with SmpB. tmRNA is encoded by the ssrA gene; the 2 termini fold to resemble tRNA(Ala) and it encodes a 'tag peptide', a short internal open reading frame. During trans-translation Ala-aminoacylated tmRNA acts like a tRNA, entering the A-site of stalled ribosomes, displacing the stalled mRNA. The ribosome then switches to translate the ORF on the tmRNA; the nascent peptide is terminated with the 'tag peptide' encoded by the tmRNA and targeted for degradation. The ribosome is freed to recommence translation, which seems to be the essential function of trans-translation. The sequence is that of SsrA-binding protein from Albidiferax ferrireducens (strain ATCC BAA-621 / DSM 15236 / T118) (Rhodoferax ferrireducens).